Consider the following 570-residue polypeptide: Acetolactate synthase (570 aa).

Residue Glu-60 participates in thiamine diphosphate binding. Residues Gln-162, 266–287 (FRNQPGDLLLEQADVVLTIGYD), and 308–327 (DEIIADIDHAYQPDLELIGD) each bind FAD. A thiamine pyrophosphate binding region spans residues 399-479 (SHAIWMSRYF…IVHIVWNDST (81 aa)). Residue Asp-450 participates in Mg(2+) binding.

It belongs to the TPP enzyme family. Mg(2+) is required as a cofactor. Requires thiamine diphosphate as cofactor.

The enzyme catalyses 2 pyruvate + H(+) = (2S)-2-acetolactate + CO2. The protein operates within polyol metabolism; (R,R)-butane-2,3-diol biosynthesis; (R,R)-butane-2,3-diol from pyruvate: step 1/3. In Bacillus subtilis (strain 168), this protein is Acetolactate synthase (alsS).